A 183-amino-acid chain; its full sequence is Ras-related protein Rap-2a (183 aa).

10–17 is a binding site for GTP; sequence GSGGVGKS. Positions 32–40 match the Effector region motif; it reads YDPTIEDFY. (Microbial infection) O-linked (Glc) threonine; by C.difficile toxin TcdA, and by P.sordellii toxin TcsL glycosylation is present at T35. Residues 57-61 and 116-119 each bind GTP; these read DTAGT and NKVD. 2 S-palmitoyl cysteine lipidation sites follow: C176 and C177. C180 carries the post-translational modification Cysteine methyl ester. A lipid anchor (S-farnesyl cysteine) is attached at C180. A propeptide spans 181–183 (removed in mature form); sequence NIQ.

The protein belongs to the small GTPase superfamily. Ras family. As to quaternary structure, interacts (GTP-bound form) with RUNDC3A. Interacts with RGS14; the interaction is GTP-dependent. Interacts with PLCE1. Interacts with ARHGAP29, SGSM1, SGSM2 and SGSM3. Interacts (GTP-bound form preferentially) with TNIK (via the CNH domain); the interaction is direct and recruits RAP2A to the E3 ubiquitin ligase NEDD4. Interacts with MINK1. Interacts (GTP-bound form preferentially) with MAP4K4. Interacts with cytoskeletal actin. Post-translationally, ubiquitinated; undergoes 'Lys-63' monoubiquitination and diubiquitination by NEDD4. Multiple lysine residues are probably modified. Ubiquitination requires TNIK, prevents interaction with effectors and inactivates RAP2A. Ubiquitination by the ECS(RAB40B) complex leads to RAP2A localization to lamellipodia plasma membrane, activation, and regulation of sorting at early endosomes for recycling to the lamellipodia plasma membrane. Palmitoylated. Palmitoylation is required for association with recycling endosome membranes and activation of TNIK. In terms of processing, (Microbial infection) Glucosylated at Thr-35 by C.difficile toxin TcdA in the colonic epithelium, and by P.sordellii toxin TcsL in the vascular endothelium.

Its subcellular location is the midbody. It localises to the cell projection. It is found in the lamellipodium membrane. The protein resides in the golgi apparatus. The protein localises to the recycling endosome membrane. Its subcellular location is the lysosome. It catalyses the reaction GTP + H2O = GDP + phosphate + H(+). With respect to regulation, activated by the guanine nucleotide-exchange factors RAPGEF3 and RAPGEF4 in a cAMP-dependent manner. Nucleotide exchange is also specifically stimulated by RAPGEF5, RASGEF1A and RASGEF1B. Functionally, small GTP-binding protein which cycles between a GDP-bound inactive and a GTP-bound active form. In its active form interacts with and regulates several effectors including MAP4K4, MINK1 and TNIK. Part of a signaling complex composed of NEDD4, RAP2A and TNIK which regulates neuronal dendrite extension and arborization during development. More generally, it is part of several signaling cascades and regulates cytoskeletal rearrangements, cell migration, cell adhesion and cell spreading. The sequence is that of Ras-related protein Rap-2a from Homo sapiens (Human).